The primary structure comprises 65 residues: Large ribosomal subunit protein bL35 (65 aa).

This sequence belongs to the bacterial ribosomal protein bL35 family.

The sequence is that of Large ribosomal subunit protein bL35 from Geobacter sp. (strain M21).